We begin with the raw amino-acid sequence, 132 residues long: Tumor suppressor ARF (132 aa).

The segment at 1–64 (MVRRFLVTLR…LGQQPLPRRP (64 aa)) is interaction with CDK5RAP3 and MDM2. The interval 56 to 132 (GQQPLPRRPG…CLGPSARGPG (77 aa)) is disordered. Residues 71–83 (RPSGGAAAAPRRG) are compositionally biased toward low complexity. The segment covering 84-99 (AQLRRPRHSHPTRARR) has biased composition (basic residues). Residues 103-117 (GLPGHAGGAAPGRGA) show a composition bias toward gly residues.

In terms of assembly, does not interact with cyclins, CDK1, CDK2, CDK4, CDK5 or CDK6. Binds to BCL6, E2F1, HUWE1, MDM2, MYC, NPM1/B23, TOP1/TOPOI and UBE2I/UBC9. Interacts with TBRG1 and COMMD1. Interacts with CDKN2AIP and E4F1. Interacts with CDK5RAP3 and MDM2; form a ternary complex involved in regulation of p53/TP53. Interacts with NOP53; the interaction is direct and promotes ARF nucleoplasmic relocalization and ubiquitin-mediated proteasomal degradation. Interacts with TTF1 (via the N-terminal region (NRD) and a C-terminal region); the interaction is direct and inhibits the nucleolar localization of TTF1. As to quaternary structure, interacts with C1QBP. In terms of processing, ubiquitinated in normal cells by TRIP12 via the ubiquitin fusion degradation (UFD) pathway, a process that mediates ubiquitination at the N-terminus, regardless of the absence of lysine residues. Ubiquitination leads to its proteasomal degradation. In cancer cells, however, TRIP12 is located in a different cell compartment, preventing ubiquitination and degradation.

It localises to the nucleus. It is found in the nucleolus. The protein resides in the nucleoplasm. Its subcellular location is the mitochondrion. Capable of inducing cell cycle arrest in G1 and G2 phases. Acts as a tumor suppressor. Binds to MDM2 and blocks its nucleocytoplasmic shuttling by sequestering it in the nucleolus. This inhibits the oncogenic action of MDM2 by blocking MDM2-induced degradation of p53 and enhancing p53-dependent transactivation and apoptosis. Also induces G2 arrest and apoptosis in a p53-independent manner by preventing the activation of cyclin B1/CDC2 complexes. Binds to BCL6 and down-regulates BCL6-induced transcriptional repression. Binds to E2F1 and MYC and blocks their transcriptional activator activity but has no effect on MYC transcriptional repression. Binds to TOP1/TOPOI and stimulates its activity. This complex binds to rRNA gene promoters and may play a role in rRNA transcription and/or maturation. Interacts with NPM1/B23 and promotes its polyubiquitination and degradation, thus inhibiting rRNA processing. Plays a role in inhibiting ribosome biogenesis, perhaps by binding to the nucleolar localization sequence of transcription termination factor TTF1, and thereby preventing nucleolar localization of TTF1. Interacts with COMMD1 and promotes its 'Lys63'-linked polyubiquitination. Interacts with UBE2I/UBC9 and enhances sumoylation of a number of its binding partners including MDM2 and E2F1. Binds to HUWE1 and represses its ubiquitin ligase activity. May play a role in controlling cell proliferation and apoptosis during mammary gland development. Its function is as follows. May be involved in regulation of autophagy and caspase-independent cell death; the short-lived mitochondrial isoform is stabilized by C1QBP. This chain is Tumor suppressor ARF, found in Homo sapiens (Human).